We begin with the raw amino-acid sequence, 444 residues long: ATP-dependent protease ATPase subunit HslU (444 aa).

ATP-binding positions include Ile20 and 62 to 67 (GVGKTE). A disordered region spans residues 130–158 (EDRILDALVPPPRGASGEPERGEDNSARQ). Residues Asp257, Glu322, and Arg394 each contribute to the ATP site.

It belongs to the ClpX chaperone family. HslU subfamily. As to quaternary structure, a double ring-shaped homohexamer of HslV is capped on each side by a ring-shaped HslU homohexamer. The assembly of the HslU/HslV complex is dependent on binding of ATP.

The protein resides in the cytoplasm. Its function is as follows. ATPase subunit of a proteasome-like degradation complex; this subunit has chaperone activity. The binding of ATP and its subsequent hydrolysis by HslU are essential for unfolding of protein substrates subsequently hydrolyzed by HslV. HslU recognizes the N-terminal part of its protein substrates and unfolds these before they are guided to HslV for hydrolysis. In Bordetella pertussis (strain Tohama I / ATCC BAA-589 / NCTC 13251), this protein is ATP-dependent protease ATPase subunit HslU.